The following is a 437-amino-acid chain: Putative O-antigen export protein (437 aa).

The next 12 helical transmembrane spans lie at 3-23, 41-61, 81-101, 129-149, 152-172, 185-205, 231-251, 269-289, 310-330, 332-352, 375-395, and 398-418; these read VPTH…SIFI, AVFT…FGLG, LVLS…ILIL, VASF…IWFS, KGWV…VFLM, IIFS…ISTL, GGFF…YIVM, TFGL…PVCA, FGFI…DFIV, ILAP…FSFY, LWIS…VGAV, and GLVG…SWWL.

It localises to the cell inner membrane. The protein operates within bacterial outer membrane biogenesis; LPS O-antigen biosynthesis. Functionally, may be involved in the translocation process of the nascent O-polysaccharide molecules and/or its ligation to lipid A core units. The polypeptide is Putative O-antigen export protein (rfbX) (Yersinia pseudotuberculosis).